We begin with the raw amino-acid sequence, 424 residues long: Arginine ADP-riboxanase OspC4 (424 aa).

NAD(+) contacts are provided by histidine 85, glutamine 86, serine 87, leucine 91, isoleucine 104, asparagine 114, phenylalanine 130, histidine 148, phenylalanine 153, aspartate 173, and glutamate 268. Residue glutamate 268 is part of the active site. ANK repeat units follow at residues 311–340, 355–386, and 393–422; these read MAHQ…FTKQ, NLYD…DVNK, and SGDT…GIRQ.

Belongs to the OspC family.

It is found in the secreted. It localises to the host cytoplasm. It catalyses the reaction L-arginyl-[protein] + NAD(+) = ADP-riboxanated L-argininyl-[protein] + nicotinamide + NH4(+) + H(+). Functionally, ADP-riboxanase effector that mediates arginine ADP-riboxanation of host caspase CASP4/CASP11, thereby inhibiting pyroptosis. This chain is Arginine ADP-riboxanase OspC4, found in Shigella flexneri.